Consider the following 259-residue polypeptide: uncharacterized protein (259 aa).

Glu-46 is a catalytic residue.

The protein belongs to the PhzF family.

This is an uncharacterized protein from Pseudomonas aeruginosa (strain ATCC 15692 / DSM 22644 / CIP 104116 / JCM 14847 / LMG 12228 / 1C / PRS 101 / PAO1).